The sequence spans 458 residues: MLPSQSPAIFTVSRLNQTVRLLLEHEMGQVWISGEISNFTQPASGHWYFTLKDDTAQVRCAMFRNSNRRVTFRPQHGQQVLVRANITLYEPRGDYQIIVESMQPAGEGLLQLKYEQLKAKLQAEGLFDLQYKKSLPSPAHCVGVITSKTGAALHDILHVLKRRDPSLPVIIYPTAVQGDDAPGQIVRAIELANQRNECDVLIVGRGGGSLEDLWSFNDERVARAIFASRIPIVSAVGHETDVTIADFVADLRAPTPSAAAEVVSRNQQELLRQVQSTHQRLEMAMDYYLANRTRRFTQIHHRLQQQHPQLRLARQQTMLERLQKRMSFALESQLKRAGQQQQRLTRQLVQQNPQSRIHRAQTRIQQLEYRLAETLRAQLSATRERFGNAVTHLEAVSPLSTLARGYSVTSAADGAVLKQVKQVKVGETLTTRLGDGVVISEVSAVTKTRKSRKKTSNP.

The protein belongs to the XseA family. In terms of assembly, heterooligomer composed of large and small subunits.

It is found in the cytoplasm. The enzyme catalyses Exonucleolytic cleavage in either 5'- to 3'- or 3'- to 5'-direction to yield nucleoside 5'-phosphates.. Its function is as follows. Bidirectionally degrades single-stranded DNA into large acid-insoluble oligonucleotides, which are then degraded further into small acid-soluble oligonucleotides. The protein is Exodeoxyribonuclease 7 large subunit of Escherichia coli (strain UTI89 / UPEC).